The following is a 514-amino-acid chain: 2-isopropylmalate synthase (514 aa).

Residues 5 to 268 enclose the Pyruvate carboxyltransferase domain; the sequence is LIIFDTTLRD…DVGIDTTQIV (264 aa). Mn(2+) contacts are provided by Asp14, His202, His204, and Asn239. Positions 395 to 514 are regulatory domain; the sequence is KFVSLSQRSE…KDDKLNPQRA (120 aa).

It belongs to the alpha-IPM synthase/homocitrate synthase family. LeuA type 1 subfamily. In terms of assembly, homodimer. The cofactor is Mn(2+).

The protein resides in the cytoplasm. The catalysed reaction is 3-methyl-2-oxobutanoate + acetyl-CoA + H2O = (2S)-2-isopropylmalate + CoA + H(+). The protein operates within amino-acid biosynthesis; L-leucine biosynthesis; L-leucine from 3-methyl-2-oxobutanoate: step 1/4. Catalyzes the condensation of the acetyl group of acetyl-CoA with 3-methyl-2-oxobutanoate (2-ketoisovalerate) to form 3-carboxy-3-hydroxy-4-methylpentanoate (2-isopropylmalate). This Burkholderia cenocepacia (strain HI2424) protein is 2-isopropylmalate synthase.